The chain runs to 240 residues: Purine nucleoside phosphorylase RC0672 (240 aa).

Zn(2+) is bound by residues His-60, Cys-96, and His-113.

This sequence belongs to the purine nucleoside phosphorylase YfiH/LACC1 family. Homodimer. It depends on Cu(2+) as a cofactor. Zn(2+) is required as a cofactor.

The enzyme catalyses adenosine + phosphate = alpha-D-ribose 1-phosphate + adenine. It catalyses the reaction S-methyl-5'-thioadenosine + phosphate = 5-(methylsulfanyl)-alpha-D-ribose 1-phosphate + adenine. The catalysed reaction is inosine + phosphate = alpha-D-ribose 1-phosphate + hypoxanthine. It carries out the reaction adenosine + H2O + H(+) = inosine + NH4(+). Functionally, purine nucleoside enzyme that catalyzes the phosphorolysis of adenosine and inosine nucleosides, yielding D-ribose 1-phosphate and the respective free bases, adenine and hypoxanthine. Also catalyzes the phosphorolysis of S-methyl-5'-thioadenosine into adenine and S-methyl-5-thio-alpha-D-ribose 1-phosphate. Also has adenosine deaminase activity. The chain is Purine nucleoside phosphorylase RC0672 from Rickettsia conorii (strain ATCC VR-613 / Malish 7).